The sequence spans 453 residues: Bifunctional protein GlmU (453 aa).

Residues 1–228 (MPHWAAVIMA…VHEALGINSR (228 aa)) form a pyrophosphorylase region. UDP-N-acetyl-alpha-D-glucosamine-binding positions include Lys23, Gln73, 78–79 (GT), 100–102 (SGD), Gly139, Glu153, Asn168, and Asn226. Position 102 (Asp102) interacts with Mg(2+). Asn226 contacts Mg(2+). The interval 229–249 (AQLAAAEDVARQRILSYWMEE) is linker. The interval 250–453 (GVTIIDPRST…IENWVRNKKK (204 aa)) is N-acetyltransferase. Residues Arg331 and Lys349 each coordinate UDP-N-acetyl-alpha-D-glucosamine. His361 serves as the catalytic Proton acceptor. The UDP-N-acetyl-alpha-D-glucosamine site is built by Tyr364 and Asn375. Acetyl-CoA-binding positions include Ala378, 384–385 (NY), Ser403, Ala421, and Arg438.

This sequence in the N-terminal section; belongs to the N-acetylglucosamine-1-phosphate uridyltransferase family. It in the C-terminal section; belongs to the transferase hexapeptide repeat family. Homotrimer. The cofactor is Mg(2+).

The protein resides in the cytoplasm. The catalysed reaction is alpha-D-glucosamine 1-phosphate + acetyl-CoA = N-acetyl-alpha-D-glucosamine 1-phosphate + CoA + H(+). The enzyme catalyses N-acetyl-alpha-D-glucosamine 1-phosphate + UTP + H(+) = UDP-N-acetyl-alpha-D-glucosamine + diphosphate. Its pathway is nucleotide-sugar biosynthesis; UDP-N-acetyl-alpha-D-glucosamine biosynthesis; N-acetyl-alpha-D-glucosamine 1-phosphate from alpha-D-glucosamine 6-phosphate (route II): step 2/2. It participates in nucleotide-sugar biosynthesis; UDP-N-acetyl-alpha-D-glucosamine biosynthesis; UDP-N-acetyl-alpha-D-glucosamine from N-acetyl-alpha-D-glucosamine 1-phosphate: step 1/1. The protein operates within bacterial outer membrane biogenesis; LPS lipid A biosynthesis. Its function is as follows. Catalyzes the last two sequential reactions in the de novo biosynthetic pathway for UDP-N-acetylglucosamine (UDP-GlcNAc). The C-terminal domain catalyzes the transfer of acetyl group from acetyl coenzyme A to glucosamine-1-phosphate (GlcN-1-P) to produce N-acetylglucosamine-1-phosphate (GlcNAc-1-P), which is converted into UDP-GlcNAc by the transfer of uridine 5-monophosphate (from uridine 5-triphosphate), a reaction catalyzed by the N-terminal domain. The protein is Bifunctional protein GlmU of Desulfitobacterium hafniense (strain DSM 10664 / DCB-2).